A 124-amino-acid polypeptide reads, in one-letter code: Fluoride-specific ion channel FluC (124 aa).

4 helical membrane-spanning segments follow: residues 6–26 (LLIGVGGFFGAIFRYLISGIV), 37–57 (LAVNLIGSFILGFLLYCSLFA), 69–89 (TGFCGALTTFSTFSYETFVLV), and 92–112 (GLLFKALLNILINVVGCLIMV). Residues glycine 73 and threonine 76 each contribute to the Na(+) site.

It belongs to the fluoride channel Fluc/FEX (TC 1.A.43) family.

Its subcellular location is the cell membrane. It catalyses the reaction fluoride(in) = fluoride(out). With respect to regulation, na(+) is not transported, but it plays an essential structural role and its presence is essential for fluoride channel function. In terms of biological role, fluoride-specific ion channel. Important for reducing fluoride concentration in the cell, thus reducing its toxicity. The sequence is that of Fluoride-specific ion channel FluC from Methanocaldococcus jannaschii (strain ATCC 43067 / DSM 2661 / JAL-1 / JCM 10045 / NBRC 100440) (Methanococcus jannaschii).